A 589-amino-acid polypeptide reads, in one-letter code: Aspartate--tRNA ligase (589 aa).

Residue Glu-172 coordinates L-aspartate. An aspartate region spans residues 196 to 199 (QLFK). L-aspartate is bound at residue Arg-218. Residues 218-220 (RDE) and Gln-227 contribute to the ATP site. His-449 is an L-aspartate binding site. Position 483 (Glu-483) interacts with ATP. Arg-490 is an L-aspartate binding site. 535 to 538 (GLDR) is a binding site for ATP.

The protein belongs to the class-II aminoacyl-tRNA synthetase family. Type 1 subfamily. Homodimer.

It is found in the cytoplasm. The enzyme catalyses tRNA(Asp) + L-aspartate + ATP = L-aspartyl-tRNA(Asp) + AMP + diphosphate. Its function is as follows. Catalyzes the attachment of L-aspartate to tRNA(Asp) in a two-step reaction: L-aspartate is first activated by ATP to form Asp-AMP and then transferred to the acceptor end of tRNA(Asp). The protein is Aspartate--tRNA ligase of Actinobacillus succinogenes (strain ATCC 55618 / DSM 22257 / CCUG 43843 / 130Z).